An 86-amino-acid polypeptide reads, in one-letter code: Small ribosomal subunit protein bS16 (86 aa).

The protein belongs to the bacterial ribosomal protein bS16 family.

The protein is Small ribosomal subunit protein bS16 of Leptothrix cholodnii (strain ATCC 51168 / LMG 8142 / SP-6) (Leptothrix discophora (strain SP-6)).